The sequence spans 377 residues: Probable protein phosphatase 2C 7 (377 aa).

Disordered stretches follow at residues 1 to 68 (MAAH…GKAA) and 80 to 99 (TTVA…EDDE). Residues 21–39 (PPAAEAEAAAAAAAIARAA) are compositionally biased toward low complexity. The span at 51 to 63 (GVRHPLKHRRFRA) shows a compositional bias: basic residues. The segment covering 80–89 (TTVAEATATG) has biased composition (low complexity). In terms of domain architecture, PPM-type phosphatase spans 115-361 (SCGYSSFRGR…DNITCIVVKF (247 aa)). Mn(2+) contacts are provided by Asp-151, Gly-152, Asp-313, and Asp-352.

It belongs to the PP2C family. Mg(2+) serves as cofactor. The cofactor is Mn(2+).

The catalysed reaction is O-phospho-L-seryl-[protein] + H2O = L-seryl-[protein] + phosphate. The enzyme catalyses O-phospho-L-threonyl-[protein] + H2O = L-threonyl-[protein] + phosphate. The polypeptide is Probable protein phosphatase 2C 7 (Oryza sativa subsp. japonica (Rice)).